The chain runs to 536 residues: Caspase recruitment domain-containing protein 9 (536 aa).

Position 2 is a phosphoserine (Ser2). Asp3, Cys10, and His73 together coordinate Zn(2+). A CARD domain is found at 6–98 (NDDECWSVLE…QLYKKVTGKE (93 aa)). Residues 99–116 (PARVFSMIIDASGESGLT) are linker. Coiled coils occupy residues 117–277 (QLLM…DRSS) and 332–419 (LRKD…QQLE). Lys125 participates in a covalent cross-link: Glycyl lysine isopeptide (Lys-Gly) (interchain with G-Cter in ubiquitin). Residue Thr231 is modified to Phosphothreonine. Ser277 is modified (phosphoserine). Phosphoserine occurs at positions 424, 425, 431, 450, 460, 483, and 498. The tract at residues 427–536 (LEDGSPRRSQ…GSDNTDTEGS (110 aa)) is disordered. Residues 487-502 (PPEKERRRLKESFENY) show a composition bias toward basic and acidic residues. A compositionally biased stretch (basic residues) spans 503–513 (RRKRALRKMQK). Residues Thr531 and Thr533 each carry the phosphothreonine; by CK2 modification.

Monomer. Homodimer; homodimerization is mediated by the CARD domain which forms an extensive interaction with the adjacent linker and coiled-coil regions; leads to an autoinhibited state. Homomultimer; polymerizes following activation, forming a nucleating helical template that seeds BCL10-filament formation via a CARD-CARD interaction. Interacts (via CARD domain) with BCL10 (via CARD domain); interaction takes place following CARD9 activation and polymerization, leading to the formation of a filamentous CBM complex assembly. Component of a CBM complex (CARD9-BCL10, MALT1), composed of CARD9, BCL10 and MALT1. Interacts with RASGRF1. Interacts with NOD2 (via NACHT domain); interaction is direct. Interacts with RIPK2. Interacts with VHL; without leading to protein degradation. Post-translationally, phosphorylated at Thr-231 by PRKCD downstream of C-type lectin receptors activation: phosphorylation promotes interaction with BCL10, followed by activation of NF-kappa-B and MAP kinase p38 pathways. Phosphorylated at Thr-531 and Thr-533 by CK2 following interaction with VHL, leading to inhibit the ability to activate NF-kappa-B. In terms of processing, ubiquitinated at Lys-125 via 'Lys-27'-linked ubiquitin by TRIM62 downstream of C-type lectin receptors activation; leading to CARD9 activation, followed by activation of NF-kappa-B and MAP kinase p38 pathways. Deubiquitinated at Lys-125 by USP15, inhibiting CARD9. In terms of tissue distribution, expression is restricted to several populations of phagocytes, such as macrophages, monocytes, and dendritic cells. Highly expressed in spleen. Also detected in liver, placenta, lung, peripheral blood leukocytes and in brain.

Its subcellular location is the cytoplasm. With respect to regulation, maintained in an autoinhibited state via homodimerization in which the CARD domain forms an extensive interaction with the adjacent linker and coiled-coil regions. Activation downstream of C-type lectin receptors, by phosphorylation by PRKCD and/or ubiquitination by TRIM62, triggers disruption of the CARD domain-coiled coil interface, CARD9 homooligomerization and BCL10 recruitment, followed by activation of NF-kappa-B and MAP kinase p38 pathways. Zinc-binding inhibits activation by stabilizing the CARD ground-state conformation and restricting its capacity to form BCL10-nucleating filaments. Functionally, adapter protein that plays a key role in innate immune response against fungi by forming signaling complexes downstream of C-type lectin receptors. CARD9-mediated signals are essential for antifungal immunity against a subset of fungi from the phylum Ascomycota. Transduces signals in myeloid cells downstream of C-type lectin receptors CLEC7A (dectin-1), CLEC6A (dectin-2) and CLEC4E (Mincle), which detect pathogen-associated molecular pattern metabolites (PAMPs), such as fungal carbohydrates, and trigger CARD9 activation. Upon activation, CARD9 homooligomerizes to form a nucleating helical template that recruits BCL10 via CARD-CARD interaction, thereby promoting polymerization of BCL10 and subsequent recruitment of MALT1: this leads to activation of NF-kappa-B and MAP kinase p38 (MAPK11, MAPK12, MAPK13 and/or MAPK14) pathways which stimulate expression of genes encoding pro-inflammatory cytokines and chemokines. CARD9 signaling in antigen-presenting cells links innate sensing of fungi to the activation of adaptive immunity and provides a cytokine milieu that induces the development and subsequent of interleukin 17-producing T helper (Th17) cells. Also involved in activation of myeloid cells via classical ITAM-associated receptors and TLR: required for TLR-mediated activation of MAPK, while it is not required for TLR-induced activation of NF-kappa-B. CARD9 can also be engaged independently of BCL10: forms a complex with RASGRF1 downstream of C-type lectin receptors, which recruits and activates HRAS, leading to ERK activation and the production of cytokines. Acts as an important regulator of the intestinal commensal fungi (mycobiota) component of the gut microbiota. Plays an essential role in antifungal immunity against dissemination of gut fungi: acts by promoting induction of antifungal IgG antibodies response in CX3CR1(+) macrophages to confer protection against disseminated C.albicans or C.auris infection. Also mediates immunity against other pathogens, such as certain bacteria, viruses and parasites; CARD9 signaling is however redundant with other innate immune responses. In response to L.monocytogenes infection, required for the production of inflammatory cytokines activated by intracellular peptidoglycan: acts by connecting NOD2 recognition of peptidoglycan to downstream activation of MAP kinases (MAPK) without activating NF-kappa-B. This Homo sapiens (Human) protein is Caspase recruitment domain-containing protein 9.